The chain runs to 214 residues: Large ribosomal subunit protein uL3 (214 aa).

A disordered region spans residues lysine 131–glutamine 153. Polar residues predominate over residues serine 132 to valine 145. At glutamine 153 the chain carries N5-methylglutamine.

It belongs to the universal ribosomal protein uL3 family. As to quaternary structure, part of the 50S ribosomal subunit. Forms a cluster with proteins L14 and L19. Post-translationally, methylated by PrmB.

In terms of biological role, one of the primary rRNA binding proteins, it binds directly near the 3'-end of the 23S rRNA, where it nucleates assembly of the 50S subunit. This is Large ribosomal subunit protein uL3 from Thiobacillus denitrificans (strain ATCC 25259 / T1).